The chain runs to 77 residues: MSTIEERVKKIVSEQLGVKEEEITNASSFVDDLGADSLDTVELVMALEEEFETEIPDEEAEKITTVQEAIDYVVSHQ.

The 76-residue stretch at 2–77 (STIEERVKKI…EAIDYVVSHQ (76 aa)) folds into the Carrier domain. Ser37 bears the O-(pantetheine 4'-phosphoryl)serine mark.

Belongs to the acyl carrier protein (ACP) family. Post-translationally, 4'-phosphopantetheine is transferred from CoA to a specific serine of apo-ACP by AcpS. This modification is essential for activity because fatty acids are bound in thioester linkage to the sulfhydryl of the prosthetic group.

The protein resides in the cytoplasm. The protein operates within lipid metabolism; fatty acid biosynthesis. Carrier of the growing fatty acid chain in fatty acid biosynthesis. The protein is Acyl carrier protein of Oceanospirillum linum.